The sequence spans 384 residues: Na(+)/H(+) antiporter NhaA (384 aa).

The next 11 helical transmembrane spans lie at 7–27 (FYNLETIGGILLFIAAVLAII), 58–78 (LLLWINDGLMAIYFLLIGLEI), 94–114 (LVPALTALAGLLFPALIFIFF), 124–144 (GWAIPTATDIAFTLGIVSLLG), 153–173 (ILLTAIAIFDDIAAIVIIALF), 179–199 (SLLSLSLALVFTLILIGLNYF), 204–224 (ISVFMLFGVALWIAVLKSGVH), 256–276 (VVFLILPLFAFANAGVSFVGL), 285–305 (VVLGIGLGLFLGKQLGIFLSL), 325–345 (VYGIALICGVGFTMSLFIGSL), and 357–377 (MVKIGVVFGSFIAGLTGFLVL).

The protein belongs to the NhaA Na(+)/H(+) (TC 2.A.33) antiporter family.

It is found in the cell inner membrane. It catalyses the reaction Na(+)(in) + 2 H(+)(out) = Na(+)(out) + 2 H(+)(in). Its function is as follows. Na(+)/H(+) antiporter that extrudes sodium in exchange for external protons. In Legionella pneumophila (strain Corby), this protein is Na(+)/H(+) antiporter NhaA.